A 139-amino-acid chain; its full sequence is ATP synthase epsilon chain, chloroplastic (139 aa).

The protein belongs to the ATPase epsilon chain family. As to quaternary structure, F-type ATPases have 2 components, CF(1) - the catalytic core - and CF(0) - the membrane proton channel. CF(1) has five subunits: alpha(3), beta(3), gamma(1), delta(1), epsilon(1). CF(0) has three main subunits: a, b and c.

Its subcellular location is the plastid. It is found in the chloroplast thylakoid membrane. In terms of biological role, produces ATP from ADP in the presence of a proton gradient across the membrane. The sequence is that of ATP synthase epsilon chain, chloroplastic from Dictyota dichotoma.